Reading from the N-terminus, the 108-residue chain is uncharacterized protein (108 aa).

One can recognise an HTH hxlR-type domain in the interval 7–106 (CPRFEKAVDI…WATEWIDPSF (100 aa)).

This is an uncharacterized protein from Bacillus subtilis (strain 168).